The sequence spans 180 residues: ATP-dependent protease subunit HslV (180 aa).

The active site involves Thr-7. Na(+) is bound by residues Gly-165, Cys-168, and Thr-171.

The protein belongs to the peptidase T1B family. HslV subfamily. As to quaternary structure, a double ring-shaped homohexamer of HslV is capped on each side by a ring-shaped HslU homohexamer. The assembly of the HslU/HslV complex is dependent on binding of ATP.

The protein resides in the cytoplasm. The enzyme catalyses ATP-dependent cleavage of peptide bonds with broad specificity.. Its activity is regulated as follows. Allosterically activated by HslU binding. In terms of biological role, protease subunit of a proteasome-like degradation complex believed to be a general protein degrading machinery. This chain is ATP-dependent protease subunit HslV, found in Bacillus cereus (strain ATCC 10987 / NRS 248).